Reading from the N-terminus, the 980-residue chain is Ovochymase-2 (980 aa).

An N-terminal signal peptide occupies residues 1–21; it reads MAETSVFSIMMLTVMTAVGRG. Positions 22 to 49 are cleaved as a propeptide — activation peptide; sequence ATDRPGRVSRCGERPSANASVTYNLLSR. Asn-39 carries N-linked (GlcNAc...) asparagine glycosylation. One can recognise a Peptidase S1 1 domain in the interval 50–299; that stretch reads IVGGTSAVKG…LLNWLSANLN (250 aa). A disulfide bridge links Cys-75 with Cys-91. The active-site Charge relay system is the His-90. Ca(2+) contacts are provided by Val-112 and Glu-117. Catalysis depends on Asp-140, which acts as the Charge relay system. Disulfide bonds link Cys-174-Cys-244, Cys-205-Cys-223, Cys-234-Cys-263, Cys-312-Cys-342, Cys-369-Cys-388, Cys-435-Cys-462, Cys-489-Cys-510, Cys-618-Cys-634, Cys-716-Cys-779, Cys-744-Cys-757, and Cys-769-Cys-798. Ser-238 acts as the Charge relay system in catalysis. 2 consecutive CUB domains span residues 312-425 and 435-547; these read CSTN…YQAV and CGSV…ISFV. The region spanning 593 to 822 is the Peptidase S1 2 domain; sequence IIKAEEAMPN…FIPWIMETIL (230 aa). The propeptide at 593 to 980 is activation peptide; sequence IIKAEEAMPN…WLSYSFHNQN (388 aa). Residue Asn-766 is glycosylated (N-linked (GlcNAc...) asparagine). Positions 835–863 are disordered; it reads HHPLIPPDKLSQEKALLPDSPPSNDSSSS. Asn-858 and Asn-932 each carry an N-linked (GlcNAc...) asparagine glycan.

This sequence belongs to the peptidase S1 family. The catalytically inactive 108 kDa form is processed both N- and C-terminally to give rise to catalytically active and inactive forms. Differentially expressed in the oviductal pars recta (PR) region.

The protein localises to the secreted. The enzyme catalyses Preferential cleavage at 371-Gly-Ser-Arg-|-Trp-374 of glycoprotein gp43 in Xenopus laevis coelemic egg envelope to yield gp41.. Functionally, mediates gamete interaction by affecting the vitelline coat. The sequence is that of Ovochymase-2 (OVCH2) from Rhinella arenarum (Argentine common toad).